A 118-amino-acid chain; its full sequence is Small ribosomal subunit protein uS13 (118 aa).

The disordered stretch occupies residues 94–118; it reads GLPLRGQRTRTNARTRKGPRKAIRK.

The protein belongs to the universal ribosomal protein uS13 family. In terms of assembly, part of the 30S ribosomal subunit. Forms a loose heterodimer with protein S19. Forms two bridges to the 50S subunit in the 70S ribosome.

Its function is as follows. Located at the top of the head of the 30S subunit, it contacts several helices of the 16S rRNA. In the 70S ribosome it contacts the 23S rRNA (bridge B1a) and protein L5 of the 50S subunit (bridge B1b), connecting the 2 subunits; these bridges are implicated in subunit movement. Contacts the tRNAs in the A and P-sites. The protein is Small ribosomal subunit protein uS13 of Stenotrophomonas maltophilia (strain R551-3).